Here is a 250-residue protein sequence, read N- to C-terminus: uncharacterized protein (250 aa).

The N-terminal stretch at 1-17 (MRTLVLLSSVAILSTLA) is a signal peptide. Asn-48, Asn-159, Asn-223, and Asn-239 each carry an N-linked (GlcNAc...) asparagine glycan.

Its subcellular location is the secreted. This is an uncharacterized protein from Caenorhabditis elegans.